A 473-amino-acid chain; its full sequence is Pentatricopeptide repeat-containing protein At3g60050 (473 aa).

9 PPR repeats span residues 148–182, 183–217, 218–252, 253–287, 288–322, 323–357, 358–392, 393–427, and 428–462; these read TVNS…GFPT, TART…NYRP, FKHS…GFSP, DVLT…GFSP, DSYT…GIDP, SVLH…GCRP, DVVC…GQLP, NVFT…GCNP, and NFVV…GHYV.

This sequence belongs to the PPR family. P subfamily.

The chain is Pentatricopeptide repeat-containing protein At3g60050 from Arabidopsis thaliana (Mouse-ear cress).